We begin with the raw amino-acid sequence, 117 residues long: Immunoglobulin kappa variable 1-33 (117 aa).

Residues M1–C22 form the signal peptide. A framework-1 region spans residues D23–C45. An Ig-like domain is found at I24 to P117. C45 and C110 are oxidised to a cystine. The interval Q46–N56 is complementarity-determining-1. Residues W57–Y71 form a framework-2 region. The tract at residues D72–T78 is complementarity-determining-2. The interval G79 to C110 is framework-3. Residues Q111–P117 are complementarity-determining-3.

In terms of assembly, immunoglobulins are composed of two identical heavy chains and two identical light chains; disulfide-linked.

It is found in the secreted. The protein resides in the cell membrane. In terms of biological role, v region of the variable domain of immunoglobulin light chains that participates in the antigen recognition. Immunoglobulins, also known as antibodies, are membrane-bound or secreted glycoproteins produced by B lymphocytes. In the recognition phase of humoral immunity, the membrane-bound immunoglobulins serve as receptors which, upon binding of a specific antigen, trigger the clonal expansion and differentiation of B lymphocytes into immunoglobulins-secreting plasma cells. Secreted immunoglobulins mediate the effector phase of humoral immunity, which results in the elimination of bound antigens. The antigen binding site is formed by the variable domain of one heavy chain, together with that of its associated light chain. Thus, each immunoglobulin has two antigen binding sites with remarkable affinity for a particular antigen. The variable domains are assembled by a process called V-(D)-J rearrangement and can then be subjected to somatic hypermutations which, after exposure to antigen and selection, allow affinity maturation for a particular antigen. The protein is Immunoglobulin kappa variable 1-33 of Homo sapiens (Human).